A 121-amino-acid chain; its full sequence is Small ribosomal subunit protein uS13 (121 aa).

The disordered stretch occupies residues 91–121; sequence HRKGLPVRGQRTRTNARTRKGKKKTVAGKKK.

Belongs to the universal ribosomal protein uS13 family. As to quaternary structure, part of the 30S ribosomal subunit. Forms a loose heterodimer with protein S19. Forms two bridges to the 50S subunit in the 70S ribosome.

Its function is as follows. Located at the top of the head of the 30S subunit, it contacts several helices of the 16S rRNA. In the 70S ribosome it contacts the 23S rRNA (bridge B1a) and protein L5 of the 50S subunit (bridge B1b), connecting the 2 subunits; these bridges are implicated in subunit movement. Contacts the tRNAs in the A and P-sites. The chain is Small ribosomal subunit protein uS13 from Treponema denticola (strain ATCC 35405 / DSM 14222 / CIP 103919 / JCM 8153 / KCTC 15104).